The chain runs to 410 residues: Single Ig IL-1-related receptor (410 aa).

The Extracellular portion of the chain corresponds to 1–118; it reads MPGVCDRAPD…TLQRAGPTSH (118 aa). Residues 9 to 109 form the Ig-like C2-type domain; that stretch reads PDFLSPSEDQ…IQNISFSSFT (101 aa). 4 N-linked (GlcNAc...) asparagine glycosylation sites follow: Asn-31, Asn-73, Asn-86, and Asn-102. A disulfide bridge connects residues Cys-32 and Cys-98. The chain crosses the membrane as a helical; Signal-anchor for type III membrane protein span at residues 119–139; sequence VAAVLASLLVLLALLLAALLY. At 140-410 the chain is on the cytoplasmic side; sequence VKCRLNVLLW…FYCLVSKDDM (271 aa). The TIR domain maps to 163 to 307; the sequence is KLYDAYVSYS…DFWKEVQLAL (145 aa). Positions 340–390 are disordered; the sequence is EGRALDSEVDPDPEGDLGVRGPVFGEPSAPPHTSGVSLGESRSSEVDVSDL. The residue at position 383 (Ser-383) is a Phosphoserine.

This sequence belongs to the interleukin-1 receptor family. In terms of assembly, interacts with IL1R1, IRAK1, TLR4, TLR5, TLR9 and TRAF6. Upon IL-1 stimulation found in a complex at least composed of IL1R1, SIGIRR, MYD88, IRAK1 and TRAF6. Upon stimulation with LPC found in a complex at least composed of TLR4, SIG1IR, MYD88, IRAK1 and TRAF6. Interacts with PALM3. In terms of tissue distribution, mainly expressed in epithelial tissues such as kidney, lung and gut.

It is found in the membrane. Its function is as follows. Acts as a negative regulator of the Toll-like and IL-1R receptor signaling pathways. Attenuates the recruitment of receptor-proximal signaling components to the TLR4 receptor, probably through an TIR-TIR domain interaction with TLR4. Through its extracellular domain interferes with the heterodimerization of Il1R1 and IL1RAP. In Homo sapiens (Human), this protein is Single Ig IL-1-related receptor (SIGIRR).